The chain runs to 56 residues: Ovomucoid (56 aa).

The 51-residue stretch at 6–56 (VDCSEYPKPACTLEYRPLCGSDNKTYANKCNFCNAVVESNGTLTLSHFGKC) folds into the Kazal-like domain. 3 disulfide bridges follow: Cys8-Cys38, Cys16-Cys35, and Cys24-Cys56. Residue Asn45 is glycosylated (N-linked (GlcNAc...) asparagine).

Its subcellular location is the secreted. This is Ovomucoid from Callipepla californica (California quail).